The chain runs to 328 residues: Serine protease 27 (328 aa).

Residues 1–22 (MRQPHITALLLLPLLLRSGTEG) form the signal peptide. A propeptide spans 23–37 (AEAMRACGHPRMFNR) (activation peptide). Positions 38 to 280 (MVGGEDALEG…HYQWIHQIIP (243 aa)) constitute a Peptidase S1 domain. Cysteine 63 and cysteine 79 form a disulfide bridge. The active-site Charge relay system is histidine 78. N-linked (GlcNAc...) asparagine glycosylation is present at asparagine 82. Aspartate 127 (charge relay system) is an active-site residue. Disulfide bonds link cysteine 161-cysteine 238, cysteine 194-cysteine 217, and cysteine 228-cysteine 256. Serine 232 functions as the Charge relay system in the catalytic mechanism.

The protein belongs to the peptidase S1 family.

It localises to the secreted. The chain is Serine protease 27 (Prss27) from Rattus norvegicus (Rat).